The primary structure comprises 209 residues: Potassium-transporting ATPase KdpC subunit (209 aa).

Residues 18–38 (ALALFVLLGLGLGYSLVATGI) traverse the membrane as a helical segment.

Belongs to the KdpC family. As to quaternary structure, the system is composed of three essential subunits: KdpA, KdpB and KdpC.

It localises to the cell inner membrane. Functionally, part of the high-affinity ATP-driven potassium transport (or Kdp) system, which catalyzes the hydrolysis of ATP coupled with the electrogenic transport of potassium into the cytoplasm. This subunit acts as a catalytic chaperone that increases the ATP-binding affinity of the ATP-hydrolyzing subunit KdpB by the formation of a transient KdpB/KdpC/ATP ternary complex. In Xanthomonas campestris pv. campestris (strain 8004), this protein is Potassium-transporting ATPase KdpC subunit.